The primary structure comprises 665 residues: Sodium/glucose cotransporter 1 (665 aa).

Over 1–24 (MDSSTLSPAVTATDAPIPSYERIR) the chain is Extracellular. A helical membrane pass occupies residues 25 to 47 (NAADISVIVIYFVVVMAVGLWAM). At 48 to 66 (FSTNRGTVGGFFLAGRSMV) the chain is on the cytoplasmic side. Residues 67–90 (WWPIGASLFASNIGSGHFVGLAGT) form a helical membrane-spanning segment. At 91–95 (GAAAG) the chain is on the extracellular side. The helical transmembrane segment at 96-117 (IAMGGFEWNALVLVVVLGWIFV) threads the bilayer. Over 118–139 (PIYIKAGVVTMPEYLRKRFGGK) the chain is Cytoplasmic. The helical transmembrane segment at 140-169 (RIQIYLSVLSLLLYIFTKISADIFSGAIFI) threads the bilayer. The Extracellular segment spans residues 170 to 176 (NLALGLD). The chain crosses the membrane as a helical span at residues 177 to 193 (IYLAIFILLAITALYTI). Residues 194–202 (TGGLAAVIY) lie on the Cytoplasmic side of the membrane. The helical transmembrane segment at 203-221 (TDTLQTAIMLVGSFILTGF) threads the bilayer. Topologically, residues 222–275 (AFNEVGGYEAFMDKYMKAIPTKVSNGNFTAKEECYTPRADSFHIFRDPITGDMP) are extracellular. Asn248 carries an N-linked (GlcNAc...) asparagine glycan. Intrachain disulfides connect Cys255–Cys511, Cys255–Cys611, Cys345–Cys351, Cys355–Cys361, and Cys517–Cys522. Residues 276–295 (WPGLIFGLAILALWYWCTDQ) traverse the membrane as a helical segment. The Cytoplasmic portion of the chain corresponds to 296 to 309 (VIVQRCLSAKNMSH). Residues 310-331 (VKADCTLCGYLKLLPMFLMVMP) form a helical membrane-spanning segment. Topologically, residues 332–375 (GMISRILYTEKIACVLPEECQKYCGTPVGCTNIAYPTLVVELMP) are extracellular. A helical membrane pass occupies residues 376 to 406 (NGLRGLMLSVMMASLMSSLTSIFNSASTLFT). Topologically, residues 407–422 (MDIYTKIRKKASEKEL) are cytoplasmic. The helical transmembrane segment at 423–444 (MIAGRLFILVLIGISIAWVPIV) threads the bilayer. Residues 445 to 451 (QSAQSGQ) lie on the Extracellular side of the membrane. A helical transmembrane segment spans residues 452–477 (LFDYIQSITSYLGPPIAAVFLLAIFC). Gln457 contacts D-glucose. At 478 to 481 (KRVN) the chain is on the cytoplasmic side. A helical transmembrane segment spans residues 482–504 (EQGAFWGLILGFLIGISRMITEF). At 505–525 (AYGTGSCMEPSNCPKIICGVH) the chain is on the extracellular side. Residues 526–547 (YLYFAIILFVISVITILIISFL) form a helical membrane-spanning segment. The Cytoplasmic segment spans residues 548-645 (TKPIPDVHLY…TSEKPLWRTV (98 aa)). Ser585 bears the Phosphoserine mark. Thr588 carries the post-translational modification Phosphothreonine. A helical membrane pass occupies residues 646–663 (VNINGIILLAVAVFCHAY). Topologically, residues 664 to 665 (FA) are extracellular.

This sequence belongs to the sodium:solute symporter (SSF) (TC 2.A.21) family. In terms of processing, N-glycosylation is not necessary for the cotransporter function. As to expression, expressed in enterocytes and enteroendocrine cells of small intestine (at protein level). Expressed in S3 segments of renal proximal tubules (at protein level). Expressed in endometrial glandular and epithelial cells (at protein level).

It localises to the apical cell membrane. The enzyme catalyses D-glucose(out) + 2 Na(+)(out) = D-glucose(in) + 2 Na(+)(in). The catalysed reaction is D-galactose(out) + 2 Na(+)(out) = D-galactose(in) + 2 Na(+)(in). Enhanced by the interaction with PDZK1IP1/MAP17; but unlike SLC5A2/SGLT2, PDZK1IP1 is not essential for SLC5A1 transporter activity. Possibly modulated by cholesterol binding. In terms of biological role, electrogenic Na(+)-coupled sugar symporter that actively transports D-glucose or D-galactose at the plasma membrane, with a Na(+) to sugar coupling ratio of 2:1. Transporter activity is driven by a transmembrane Na(+) electrochemical gradient set by the Na(+)/K(+) pump. Has a primary role in the transport of dietary monosaccharides from enterocytes to blood. Responsible for the absorption of D-glucose or D-galactose across the apical brush-border membrane of enterocytes, whereas basolateral exit is provided by GLUT2. Additionally, functions as a D-glucose sensor in enteroendocrine cells, triggering the secretion of the incretins GCG and GIP that control food intake and energy homeostasis. Together with SGLT2, functions in reabsorption of D-glucose from glomerular filtrate, playing a nonredundant role in the S3 segment of the proximal tubules. Transports D-glucose into endometrial epithelial cells, controlling glycogen synthesis and nutritional support for the embryo as well as the decidual transformation of endometrium prior to conception. Acts as a water channel enabling passive water transport in response to the osmotic gradient created upon sugar and Na(+) uptake. Has high water conductivity comparable to aquaporins and therefore is expected to play an important role in transepithelial water permeability, especially in the small intestine. The protein is Sodium/glucose cotransporter 1 (Slc5a1) of Mus musculus (Mouse).